A 401-amino-acid polypeptide reads, in one-letter code: Tumor necrosis factor receptor superfamily member 11B (401 aa).

Residues M1–Q21 form the signal peptide. TNFR-Cys repeat units follow at residues F24–C62, C65–C105, C107–C142, and C145–C185. 8 disulfide bridges follow: C41-C54, C44-C62, C65-C80, C83-C97, C87-C105, C107-C118, C124-C142, and C145-C160. N-linked (GlcNAc...) asparagine glycosylation is present at N98. N-linked (GlcNAc...) asparagine glycosylation is found at N152, N165, and N178. A disulfide bridge links C166 with C185. Death domains lie at D198–K269 and I270–L365. N289 carries N-linked (GlcNAc...) asparagine glycosylation.

Homodimer. Interacts with TNFSF10 and TNFSF11. Post-translationally, N-glycosylated. Contains sialic acid residues. In terms of processing, the N-terminus is blocked. Highly expressed in adult lung, heart, kidney, liver, spleen, thymus, prostate, ovary, small intestine, thyroid, lymph node, trachea, adrenal gland, testis, and bone marrow. Detected at very low levels in brain, placenta and skeletal muscle. Highly expressed in fetal kidney, liver and lung.

The protein resides in the secreted. Its function is as follows. Acts as a decoy receptor for TNFSF11/RANKL and thereby neutralizes its function in osteoclastogenesis. Inhibits the activation of osteoclasts and promotes osteoclast apoptosis in vitro. Bone homeostasis seems to depend on the local ratio between TNFSF11 and TNFRSF11B. May also play a role in preventing arterial calcification. May act as decoy receptor for TNFSF10/TRAIL and protect against apoptosis. TNFSF10/TRAIL binding blocks the inhibition of osteoclastogenesis. The polypeptide is Tumor necrosis factor receptor superfamily member 11B (TNFRSF11B) (Homo sapiens (Human)).